We begin with the raw amino-acid sequence, 378 residues long: Trans-enoyl reductase poxP (378 aa).

NADP(+) is bound at residue 62–65 (CDWK). A substrate-binding site is contributed by 151–158 (SVFATLWI). Residues 187–190 (STST), 210–213 (SPHN), Y228, and 275–276 (LE) contribute to the NADP(+) site. 295-299 (GLAAS) lines the substrate pocket. 364–365 (TS) serves as a coordination point for NADP(+).

The protein belongs to the zinc-containing alcohol dehydrogenase family. Monomer.

Its pathway is secondary metabolite biosynthesis. In terms of biological role, trans-enoyl reductase; part of the gene cluster that mediates the biosynthesis of oxaleimides, cytotoxic compounds containing an unusual disubstituted succinimide moiety. The first step of the pathway is provided by the HR-PKS poxF that serves in a new mode of collaborative biosynthesis with the PKS-NRPS poxE, by providing the olefin containing amino acid substrate via the synthesis of an ACP-bound dec-4-enoate. The cytochrome P450 monooxygenase poxM-catalyzed oxidation at the alpha-position creates the enzyme-bound 2-hydroxydec-4-enoyl-ACP thioester, which may be prone to spontaneous hydrolysis to yield 2-hydroxydec-4-enoic acid due to increased electrophilicity of the carbonyl. 2-hydroxydec-4-enoic acid can then be further oxidized by poxM to yield the alpha-ketoacid 2-oxodec-4-enoicacid, which is reductively aminated by the aminotransferase poxL to yield (S,E)-2-aminodec-4-enoic acid. The Hybrid PKS-NRPS synthetase poxE then performs condensation between the octaketide product of its PKS modules and the amino group of (S,E)-2-aminodec-4-enoic acid which is activated and incorporated by the adenylation domain. The resulting aminoacyl product can be cyclized by the Diels-Alderase PoxQ and reductively released by the reductive (R) domain of poxE to yield an aldehyde intermediate. The released aldehyde is then substrate for a Knoevenagel condensation by the hydrolyase poxO followed by an oxidation at the 5-position of the pyrrolidone ring. The presence of the olefin from the amino acid building block allows for migration of the substituted allyl group to occur. This allylic transposition reaction takes place in a conjugate addition, semipinacol-like fashion to yield a succinimide intermediate. Iterative two-electron oxidations of the C7 methyl of the succinimide intermediate to the carboxylic acid can be catalyzed by one of two remaining cytochrome P450 monooxygenasess poxC or poxD to yield oxaleimide A. Subsequent oxidation yields the maleimide scaffold oxaleimide I. Both oxaleimide A and oxaleimide I can undergo oxidative modifications in the decalin ring to yield the series of products oxaleimides B to H. This is Trans-enoyl reductase poxP from Penicillium oxalicum.